Here is a 149-residue protein sequence, read N- to C-terminus: 3-dehydroquinate dehydratase (149 aa).

The active-site Proton acceptor is Tyr26. Residues Asn77, His83, and Asp90 each coordinate substrate. The Proton donor role is filled by His103. Residues 104–105 (LS) and Arg114 each bind substrate.

It belongs to the type-II 3-dehydroquinase family. Homododecamer.

It carries out the reaction 3-dehydroquinate = 3-dehydroshikimate + H2O. It participates in metabolic intermediate biosynthesis; chorismate biosynthesis; chorismate from D-erythrose 4-phosphate and phosphoenolpyruvate: step 3/7. In terms of biological role, catalyzes a trans-dehydration via an enolate intermediate. In Psychromonas ingrahamii (strain DSM 17664 / CCUG 51855 / 37), this protein is 3-dehydroquinate dehydratase.